The chain runs to 511 residues: uncharacterized protein (511 aa).

The next 3 membrane-spanning stretches (helical) occupy residues 33-53, 59-79, and 97-117; these read IICM…LAMA, IPVQ…AHIS, and VGRF…TTSI. Ser-147, Ser-161, and Ser-162 each carry phosphoserine. Positions 157-180 are disordered; the sequence is REGNSSDEYLPPQSSRRDVSSEKP. The next 7 membrane-spanning stretches (helical) occupy residues 216 to 236, 249 to 269, 297 to 317, 332 to 352, 412 to 432, 449 to 469, and 483 to 503; these read LWLY…AGIF, IKGA…LGAF, MVES…EHLG, SLAF…SKVV, VLWG…YIML, IITS…SYDV, and IMNI…MFLI.

It to yeast YCR061W.

The protein resides in the endoplasmic reticulum membrane. This is an uncharacterized protein from Schizosaccharomyces pombe (strain 972 / ATCC 24843) (Fission yeast).